Reading from the N-terminus, the 843-residue chain is Protein P (843 aa).

A terminal protein domain (TP) region spans residues 1 to 177 (MPLSYQHFRK…FCGSPYSWEQ (177 aa)). Residues 178-346 (DLQHGRLVIQ…YCLCHIVNLI (169 aa)) form a spacer region. Disordered stretches follow at residues 219–258 (RKSR…VGVE) and 297–316 (SSGH…RSQS). A polymerase/reverse transcriptase domain (RT) region spans residues 347 to 690 (DDWGPCAEHG…YLNLYPVARQ (344 aa)). One can recognise a Reverse transcriptase domain in the interval 357 to 600 (EHRIRTPRTP…YSLNFMGYVI (244 aa)). Positions 429, 551, and 552 each coordinate Mg(2+).

It belongs to the hepadnaviridae P protein family.

The catalysed reaction is DNA(n) + a 2'-deoxyribonucleoside 5'-triphosphate = DNA(n+1) + diphosphate. The enzyme catalyses Endonucleolytic cleavage to 5'-phosphomonoester.. Activated by host HSP70 and HSP40 in vitro to be able to bind the epsilon loop of the pgRNA. Because deletion of the RNase H region renders the protein partly chaperone-independent, the chaperones may be needed indirectly to relieve occlusion of the RNA-binding site by this domain. Inhibited by several reverse-transcriptase inhibitors: Lamivudine, Adefovir and Entecavir. Its function is as follows. Multifunctional enzyme that converts the viral RNA genome into dsDNA in viral cytoplasmic capsids. This enzyme displays a DNA polymerase activity that can copy either DNA or RNA templates, and a ribonuclease H (RNase H) activity that cleaves the RNA strand of RNA-DNA heteroduplexes in a partially processive 3'- to 5'-endonucleasic mode. Neo-synthesized pregenomic RNA (pgRNA) are encapsidated together with the P protein, and reverse-transcribed inside the nucleocapsid. Initiation of reverse-transcription occurs first by binding the epsilon loop on the pgRNA genome, and is initiated by protein priming, thereby the 5'-end of (-)DNA is covalently linked to P protein. Partial (+)DNA is synthesized from the (-)DNA template and generates the relaxed circular DNA (RC-DNA) genome. After budding and infection, the RC-DNA migrates in the nucleus, and is converted into a plasmid-like covalently closed circular DNA (cccDNA). The activity of P protein does not seem to be necessary for cccDNA generation, and is presumably released from (+)DNA by host nuclear DNA repair machinery. The polypeptide is Protein P (Hepatitis B virus genotype B1 (isolate Japan/Ry30/2002) (HBV-B)).